Here is a 226-residue protein sequence, read N- to C-terminus: 7-cyano-7-deazaguanine synthase (226 aa).

Residue 9 to 19 (LSGGLDSATVL) participates in ATP binding. Residues cysteine 189, cysteine 199, cysteine 202, and cysteine 205 each contribute to the Zn(2+) site.

Belongs to the QueC family. Requires Zn(2+) as cofactor.

It catalyses the reaction 7-carboxy-7-deazaguanine + NH4(+) + ATP = 7-cyano-7-deazaguanine + ADP + phosphate + H2O + H(+). It functions in the pathway purine metabolism; 7-cyano-7-deazaguanine biosynthesis. Functionally, catalyzes the ATP-dependent conversion of 7-carboxy-7-deazaguanine (CDG) to 7-cyano-7-deazaguanine (preQ(0)). The polypeptide is 7-cyano-7-deazaguanine synthase (Cupriavidus pinatubonensis (strain JMP 134 / LMG 1197) (Cupriavidus necator (strain JMP 134))).